Here is a 611-residue protein sequence, read N- to C-terminus: Protein PES4 (611 aa).

The tract at residues 37 to 81 is disordered; that stretch reads FNPVVTPIRPDDYHEKTSRSSSSSHSDSPEFLRINNNKSGHKNGK. Residues 45 to 54 are compositionally biased toward basic and acidic residues; it reads RPDDYHEKTS. RRM domains follow at residues 91–169, 179–247, 303–379, and 393–471; these read VPLF…PSLR, TNVF…GKKI, NSIF…RAQD, and STLF…WERQ.

Its subcellular location is the nucleus. The protein is Protein PES4 (PES4) of Saccharomyces cerevisiae (strain ATCC 204508 / S288c) (Baker's yeast).